Consider the following 137-residue polypeptide: Small ribosomal subunit protein uS9 (137 aa).

Residues 105-137 form a disordered region; that stretch reads LKAEGYLTRDPRAKERKKYGLHKARKAPQYSKR. Residues 118–137 are compositionally biased toward basic residues; the sequence is KERKKYGLHKARKAPQYSKR.

Belongs to the universal ribosomal protein uS9 family.

The protein is Small ribosomal subunit protein uS9 (rpsI) of Synechocystis sp. (strain ATCC 27184 / PCC 6803 / Kazusa).